Reading from the N-terminus, the 220-residue chain is CDP-diacylglycerol--inositol 3-phosphatidyltransferase (220 aa).

At 1-20 (MSSNSTPEKVTAEHVLWYIP) the chain is on the cytoplasmic side. Residues 21–41 (NKIGYVRVITAALSFFVMKNH) traverse the membrane as a helical segment. Topologically, residues 42-45 (PTAF) are lumenal. Residues 46–66 (TWLYSTSCLLDALDGTMARKY) form a helical membrane-spanning segment. Residues aspartate 56 and aspartate 59 each coordinate Mg(2+). A CDP-1,2-diacyl-sn-glycerol contacts are provided by glycine 60, arginine 64, and serine 70. Residues 67–75 (NQVSSLGAV) are Cytoplasmic-facing. Residues 76 to 96 (LDMVTDRSSTAGLMCFLCVQY) form a helical membrane-spanning segment. Positions 77 and 81 each coordinate Mg(2+). The active-site Proton acceptor is aspartate 81. Residues 97-98 (PQ) lie on the Lumenal side of the membrane. The helical transmembrane segment at 99-119 (WCVFFQLMLGLDITSHYMHMY) threads the bilayer. Over 120 to 145 (ASLSAGKTSHKSVGEGESRLLHLYYT) the chain is Cytoplasmic. A helical membrane pass occupies residues 146 to 166 (RRDVLFTICAFNELFYAGLYL). Residues 167 to 170 (QLFS) lie on the Lumenal side of the membrane. The chain crosses the membrane as a helical span at residues 171–191 (NSATFGKWTTIISFPGYVFKQ). The Cytoplasmic segment spans residues 192 to 220 (TANVVQLKRAALILADNDAKNANEKNKTY).

This sequence belongs to the CDP-alcohol phosphatidyltransferase class-I family. The cofactor is Mn(2+). Mg(2+) serves as cofactor.

It is found in the microsome membrane. The protein resides in the endoplasmic reticulum membrane. Its subcellular location is the golgi apparatus membrane. It localises to the mitochondrion outer membrane. It catalyses the reaction a CDP-1,2-diacyl-sn-glycerol + myo-inositol = a 1,2-diacyl-sn-glycero-3-phospho-(1D-myo-inositol) + CMP + H(+). Functionally, catalyzes the synthesis of phosphatidylinositol (PtdIns). The protein is CDP-diacylglycerol--inositol 3-phosphatidyltransferase of Saccharomyces cerevisiae (strain ATCC 204508 / S288c) (Baker's yeast).